A 440-amino-acid polypeptide reads, in one-letter code: Adenylyltransferase and sulfurtransferase UBA4 (440 aa).

At methionine 1 the chain carries N-acetylmethionine. Residues glycine 77, aspartate 98, 105 to 109, lysine 122, and 166 to 167 each bind ATP; these read SNLHR and DS. Zn(2+) contacts are provided by cysteine 208 and cysteine 211. Cysteine 225 (glycyl thioester intermediate; for adenylyltransferase activity) is an active-site residue. Residues cysteine 286 and cysteine 289 each coordinate Zn(2+). Serine 326 bears the Phosphoserine mark. Positions 339 to 438 constitute a Rhodanese domain; sequence FLAKHIFLDV…YIDDIDQTIP (100 aa). The active-site Cysteine persulfide intermediate; for sulfurtransferase activity is the cysteine 397.

This sequence in the N-terminal section; belongs to the HesA/MoeB/ThiF family. UBA4 subfamily. Zn(2+) is required as a cofactor.

The protein localises to the cytoplasm. It localises to the cytosol. The protein operates within tRNA modification; 5-methoxycarbonylmethyl-2-thiouridine-tRNA biosynthesis. Plays a central role in 2-thiolation of mcm(5)S(2)U at tRNA wobble positions of cytosolic tRNA(Lys), tRNA(Glu) and tRNA(Gln). Acts by mediating the C-terminal thiocarboxylation of sulfur carrier URM1. Its N-terminus first activates URM1 as acyl-adenylate (-COAMP), then the persulfide sulfur on the catalytic cysteine is transferred to URM1 to form thiocarboxylation (-COSH) of its C-terminus. The reaction probably involves hydrogen sulfide that is generated from the persulfide intermediate and that acts as a nucleophile towards URM1. Subsequently, a transient disulfide bond is formed. Does not use thiosulfate as sulfur donor; NFS1 probably acting as a sulfur donor for thiocarboxylation reactions. Prior mcm(5) tRNA modification by the elongator complex is required for 2-thiolation. May also be involved in protein urmylation. The chain is Adenylyltransferase and sulfurtransferase UBA4 from Saccharomyces cerevisiae (strain YJM789) (Baker's yeast).